The chain runs to 309 residues: HPr kinase/phosphorylase (309 aa).

Catalysis depends on residues His138 and Lys159. Residue 153–160 coordinates ATP; the sequence is GKSGIGKS. Ser160 contacts Mg(2+). Asp177 functions as the Proton acceptor; for phosphorylation activity. Proton donor; for dephosphorylation activity in the catalytic mechanism. Positions 201–210 are important for the catalytic mechanism of both phosphorylation and dephosphorylation; that stretch reads IEVRGIGILD. Glu202 is a binding site for Mg(2+). Arg243 is an active-site residue. The segment at 264 to 269 is important for the catalytic mechanism of dephosphorylation; sequence PIKPAR.

The protein belongs to the HPrK/P family. Homohexamer. The cofactor is Mg(2+).

It catalyses the reaction [HPr protein]-L-serine + ATP = [HPr protein]-O-phospho-L-serine + ADP + H(+). It carries out the reaction [HPr protein]-O-phospho-L-serine + phosphate + H(+) = [HPr protein]-L-serine + diphosphate. In terms of biological role, catalyzes the ATP- as well as the pyrophosphate-dependent phosphorylation of a specific serine residue in HPr, a phosphocarrier protein of the phosphoenolpyruvate-dependent sugar phosphotransferase system (PTS). HprK/P also catalyzes the pyrophosphate-producing, inorganic phosphate-dependent dephosphorylation (phosphorolysis) of seryl-phosphorylated HPr (P-Ser-HPr). The two antagonistic activities of HprK/P are regulated by several intracellular metabolites, which change their concentration in response to the absence or presence of rapidly metabolisable carbon sources (glucose, fructose, etc.) in the growth medium. Therefore, by controlling the phosphorylation state of HPr, HPrK/P is a sensor enzyme that plays a major role in the regulation of carbon metabolism and sugar transport: it mediates carbon catabolite repression (CCR), and regulates PTS-catalyzed carbohydrate uptake and inducer exclusion. The polypeptide is HPr kinase/phosphorylase (Alkaliphilus metalliredigens (strain QYMF)).